A 258-amino-acid polypeptide reads, in one-letter code: Oxidoreductase fscI (258 aa).

NADP(+) contacts are provided by L34, R59, D82, N109, and K141. S163 (proton donor) is an active-site residue. An NADP(+)-binding site is contributed by R193.

The protein belongs to the short-chain dehydrogenases/reductases (SDR) family.

It participates in secondary metabolite biosynthesis. Functionally, oxidoreductase; part of the fragmented gene cluster that mediates the biosynthesis of fusarochromene, a tryptophan-derived metabolite closely related to a group of mycotoxins including fusarochromanone. Within the pathway, fscI catalyzes the formation of the chromene ring from the prenyl moity added by the prenyltransferase fscG. The first step of the pathway is the epimerization of L-tryptophan to D-tryptophan in the presence of the NRPS-like tryptophan epimerase fscC. D-tryptophan is subsequently hydroxylated by the tryptophan 6-hydroxylase fscE to yield 6-hydroxytryptophan. The pyrrole ring undergoes cleavaged by the tryptophan 2,3-dioxygenase fscD and is finally converted to 4-hydroxykyrunenine by the hydrolase fscH. The NRPS-like oxidoreductase fscA reduces the carboxyl group to primary alcohol and the DMATS-type prenyltransferase fscG performs prenylation, followed by the formation of a chromene ring catalyzed by the oxidoreductase fscI, which leads to desacetylfusarochromene. Epoxidation by fscF and rearrangement reactions of chromene double bonds convert compound desacetylfusarochromene to fusarochromanones. Although specific acetyltransferases were not found near the fsc gene cluster, several predicted enzymes containing the N-acetyltransferase superfamily domain are present in the genome of F.equiseti. These predicted enzymes may have the potential to convert desacetylfusarochromene to fusarochromene. The protein is Oxidoreductase fscI of Fusarium equiseti (Fusarium scirpi).